A 298-amino-acid chain; its full sequence is Inosose dehydratase (298 aa).

It belongs to the IolE/MocC family. Glutathione serves as cofactor. It depends on Co(2+) as a cofactor. Requires Mn(2+) as cofactor.

It carries out the reaction scyllo-inosose = 3D-3,5/4-trihydroxycyclohexane-1,2-dione + H2O. Its pathway is polyol metabolism; myo-inositol degradation into acetyl-CoA; acetyl-CoA from myo-inositol: step 2/7. Functionally, catalyzes the dehydration of inosose (2-keto-myo-inositol, 2KMI or 2,4,6/3,5-pentahydroxycyclohexanone) to 3D-(3,5/4)-trihydroxycyclohexane-1,2-dione (D-2,3-diketo-4-deoxy-epi-inositol). This chain is Inosose dehydratase, found in Clostridium botulinum (strain Alaska E43 / Type E3).